Reading from the N-terminus, the 283-residue chain is Bifunctional protein FolD (283 aa).

Residues 165–167 (GRS), S190, and V231 each bind NADP(+).

The protein belongs to the tetrahydrofolate dehydrogenase/cyclohydrolase family. Homodimer.

It carries out the reaction (6R)-5,10-methylene-5,6,7,8-tetrahydrofolate + NADP(+) = (6R)-5,10-methenyltetrahydrofolate + NADPH. The catalysed reaction is (6R)-5,10-methenyltetrahydrofolate + H2O = (6R)-10-formyltetrahydrofolate + H(+). Its pathway is one-carbon metabolism; tetrahydrofolate interconversion. Its function is as follows. Catalyzes the oxidation of 5,10-methylenetetrahydrofolate to 5,10-methenyltetrahydrofolate and then the hydrolysis of 5,10-methenyltetrahydrofolate to 10-formyltetrahydrofolate. This is Bifunctional protein FolD from Bacillus velezensis (strain DSM 23117 / BGSC 10A6 / LMG 26770 / FZB42) (Bacillus amyloliquefaciens subsp. plantarum).